We begin with the raw amino-acid sequence, 242 residues long: Ubiquinone biosynthesis O-methyltransferase (242 aa).

S-adenosyl-L-methionine contacts are provided by Arg44, Gly64, Asp85, and Met129.

The protein belongs to the methyltransferase superfamily. UbiG/COQ3 family.

The enzyme catalyses a 3-demethylubiquinol + S-adenosyl-L-methionine = a ubiquinol + S-adenosyl-L-homocysteine + H(+). It carries out the reaction a 3-(all-trans-polyprenyl)benzene-1,2-diol + S-adenosyl-L-methionine = a 2-methoxy-6-(all-trans-polyprenyl)phenol + S-adenosyl-L-homocysteine + H(+). Its pathway is cofactor biosynthesis; ubiquinone biosynthesis. In terms of biological role, O-methyltransferase that catalyzes the 2 O-methylation steps in the ubiquinone biosynthetic pathway. This is Ubiquinone biosynthesis O-methyltransferase from Salmonella paratyphi A (strain ATCC 9150 / SARB42).